Reading from the N-terminus, the 171-residue chain is N5-carboxyaminoimidazole ribonucleotide mutase (171 aa).

S10, D13, and R40 together coordinate substrate.

This sequence belongs to the AIR carboxylase family. Class I subfamily.

It catalyses the reaction 5-carboxyamino-1-(5-phospho-D-ribosyl)imidazole + H(+) = 5-amino-1-(5-phospho-D-ribosyl)imidazole-4-carboxylate. Its pathway is purine metabolism; IMP biosynthesis via de novo pathway; 5-amino-1-(5-phospho-D-ribosyl)imidazole-4-carboxylate from 5-amino-1-(5-phospho-D-ribosyl)imidazole (N5-CAIR route): step 2/2. Functionally, catalyzes the conversion of N5-carboxyaminoimidazole ribonucleotide (N5-CAIR) to 4-carboxy-5-aminoimidazole ribonucleotide (CAIR). In Thermotoga maritima (strain ATCC 43589 / DSM 3109 / JCM 10099 / NBRC 100826 / MSB8), this protein is N5-carboxyaminoimidazole ribonucleotide mutase.